Consider the following 431-residue polypeptide: Glutamate-1-semialdehyde 2,1-aminomutase (431 aa).

K269 is modified (N6-(pyridoxal phosphate)lysine).

This sequence belongs to the class-III pyridoxal-phosphate-dependent aminotransferase family. HemL subfamily. As to quaternary structure, homodimer. Pyridoxal 5'-phosphate is required as a cofactor.

The protein resides in the cytoplasm. It carries out the reaction (S)-4-amino-5-oxopentanoate = 5-aminolevulinate. Its pathway is porphyrin-containing compound metabolism; protoporphyrin-IX biosynthesis; 5-aminolevulinate from L-glutamyl-tRNA(Glu): step 2/2. The polypeptide is Glutamate-1-semialdehyde 2,1-aminomutase (Francisella tularensis subsp. tularensis (strain WY96-3418)).